A 311-amino-acid chain; its full sequence is Short chain dehydrogenase opdN (311 aa).

L48, K73, E96, N123, Y217, and K221 together coordinate NADP(+). Catalysis depends on Y217, which acts as the Proton donor. The active-site Lowers pKa of active site Tyr is K221.

The protein belongs to the short-chain dehydrogenases/reductases (SDR) family.

It participates in secondary metabolite biosynthesis. Short chain dehydrogenase; part of the gene cluster that mediates the biosynthesis of oxopyrrolidines, polyketide-amino acid hybrid compounds with feature structures of tetramic acid. Does not seem to play a role in oxopyrrolidines A and B biosynthesis. May be involved in further modifications of these oxopyrrolidines. The sequence is that of Short chain dehydrogenase opdN from Penicillium oxalicum (strain 114-2 / CGMCC 5302) (Penicillium decumbens).